The following is a 410-amino-acid chain: Regulator of microtubule dynamics protein 2 (410 aa).

The helical transmembrane segment at 10–27 (IFGIMVGTAGISLLLLWY) threads the bilayer. Ser51 carries the phosphoserine modification. A coiled-coil region spans residues 68-110 (FQERQLQILEKLNELLTNMEELKEEIRFLKETVPKLEEYIQDE). Ser121 bears the Phosphoserine mark. Residues 122–131 (PQHRARKRRL) are compositionally biased toward basic residues. Residues 122 to 151 (PQHRARKRRLPTIQSSATSNSSEEAESEGG) are disordered. Thr139 carries the phosphothreonine modification. The residue at position 152 (Tyr152) is a Phosphotyrosine. Phosphothreonine occurs at positions 154 and 157.

It belongs to the RMDN family. In terms of assembly, interacts with microtubules.

It is found in the membrane. Its subcellular location is the cytoplasm. The protein resides in the cytoskeleton. The protein localises to the spindle. It localises to the spindle pole. This chain is Regulator of microtubule dynamics protein 2 (RMDN2), found in Macaca fascicularis (Crab-eating macaque).